The primary structure comprises 60 residues: MAHPKRKMSKSKRDSRRAQTFKLSLPGIVECPQCHEMKLAHRVCKDCGYYDGKEIVSKEN.

The protein belongs to the bacterial ribosomal protein bL32 family.

This Clostridium novyi (strain NT) protein is Large ribosomal subunit protein bL32.